The sequence spans 75 residues: ATP synthase subunit epsilon, mitochondrial (75 aa).

Residues 1–9 constitute a mitochondrion transit peptide; sequence MIRRSCALL.

The protein belongs to the eukaryotic ATPase epsilon family. As to quaternary structure, F-type ATPases have 2 components, F(1) - the catalytic core - and F(o) - the membrane proton channel. F(1) has five subunits: alpha(3), beta(3), gamma(1), delta(1), epsilon(1), plus the additional subunit P18 (Tb427.05.1710) that is not present in F(1)F(o) ATP synthase from metazoa. Subunit P18 (Tb927.5.1710) interacts with the alpha subunit with a 1:1 stoichiometry; the interaction is direct. Subunit gamma is part of the central stalk. F(o) has three main subunits: a, b and c. The trypanosomal ATPase complex contains additional subunits that are not present in the F(1)F(o) ATP synthase from metazoa.

It localises to the mitochondrion. The protein resides in the mitochondrion inner membrane. Functionally, mitochondrial membrane ATP synthase (F(1)F(o) ATP synthase) produces ATP from ADP in the presence of a proton gradient across the membrane which is generated by electron transport complexes of the respiratory chain. F-type ATPases consist of two structural domains, F(1) - containing the extramembraneous catalytic core, and F(o) - containing the membrane proton channel, linked together by a central stalk and a peripheral stalk. During catalysis, ATP synthesis in the catalytic domain of F(1) is coupled via a rotary mechanism of the central stalk subunits to proton translocation. Subunits alpha and beta form the catalytic core in F(1). Rotation of the central stalk against the surrounding alpha(3)beta(3) subunits leads to hydrolysis of ATP in three separate catalytic sites on the beta subunits. Contrary to the procyclic, insect form that requires F(1)F(o) ATP synthase for ATP synthesis, the bloodstream form relies on ATP hydrolysis by F(1)F(o) ATP synthase to maintain its mitochondrial membrane potential. The sequence is that of ATP synthase subunit epsilon, mitochondrial from Trypanosoma brucei brucei.